Consider the following 501-residue polypeptide: ADP,ATP carrier protein 3 (501 aa).

12 helical membrane passes run 23–43 (LKLFIPMALMMLCILFNFGAL), 59–79 (IISLFKLWLVLPSCVIFTVLY), 90–110 (YIFYIIVGSFLLFFLLFAYII), 146–166 (YALMYIFSELWSAVVINLMFW), 183–203 (PVLGMVGNIGLIIAGSVLVFF), 227–247 (IMLQPIMSIIVAAGIIAMLLF), 293–313 (IALLIICYGLLINIVEGPWKA), 326–346 (FNFMGRFNIWMGISCVTFMVI), 361–381 (LLTPIMLSITGLMFFIFIIFI), 383–403 (EIGACFGDFNLLYAAIIVGAI), 446–466 (FGKSLGAFIQSLIFIIIPTAT), and 470–490 (IIIYLLVIFIVMMSLWIWNVI).

The protein belongs to the ADP/ATP translocase tlc family.

The protein localises to the cell membrane. Functionally, provides the rickettsial cell with host ATP in exchange for rickettsial ADP. This is an obligate exchange system. This energy acquiring activity is an important component of rickettsial parasitism. The protein is ADP,ATP carrier protein 3 (tlcC) of Rickettsia felis (strain ATCC VR-1525 / URRWXCal2) (Rickettsia azadi).